The sequence spans 339 residues: Dihydroorotate dehydrogenase (quinone) (339 aa).

FMN is bound by residues 61–65 (AGLDK) and Thr-85. Lys-65 contributes to the substrate binding site. 110–114 (NRMGF) provides a ligand contact to substrate. 2 residues coordinate FMN: Asn-138 and Asn-171. Asn-171 is a binding site for substrate. Residue Ser-174 is the Nucleophile of the active site. Position 176 (Asn-176) interacts with substrate. FMN contacts are provided by Lys-216 and Thr-244. Residue 245–246 (NT) participates in substrate binding. FMN-binding positions include Gly-267, Gly-296, and 317–318 (YS).

Belongs to the dihydroorotate dehydrogenase family. Type 2 subfamily. As to quaternary structure, monomer. It depends on FMN as a cofactor.

The protein resides in the cell membrane. The catalysed reaction is (S)-dihydroorotate + a quinone = orotate + a quinol. Its pathway is pyrimidine metabolism; UMP biosynthesis via de novo pathway; orotate from (S)-dihydroorotate (quinone route): step 1/1. Its function is as follows. Catalyzes the conversion of dihydroorotate to orotate with quinone as electron acceptor. The protein is Dihydroorotate dehydrogenase (quinone) of Teredinibacter turnerae (strain ATCC 39867 / T7901).